The primary structure comprises 176 residues: Translation initiation factor IF-3 (176 aa).

This sequence belongs to the IF-3 family. In terms of assembly, monomer.

Its subcellular location is the cytoplasm. Its function is as follows. IF-3 binds to the 30S ribosomal subunit and shifts the equilibrium between 70S ribosomes and their 50S and 30S subunits in favor of the free subunits, thus enhancing the availability of 30S subunits on which protein synthesis initiation begins. The polypeptide is Translation initiation factor IF-3 (Streptococcus agalactiae serotype Ia (strain ATCC 27591 / A909 / CDC SS700)).